The chain runs to 62 residues: Small ribosomal subunit protein eS17 (62 aa).

Belongs to the eukaryotic ribosomal protein eS17 family.

This chain is Small ribosomal subunit protein eS17, found in Methanocaldococcus jannaschii (strain ATCC 43067 / DSM 2661 / JAL-1 / JCM 10045 / NBRC 100440) (Methanococcus jannaschii).